Reading from the N-terminus, the 366-residue chain is tRNA/tmRNA (uracil-C(5))-methyltransferase (366 aa).

Residues Gln-190, Tyr-218, Asn-223, Glu-239, and Asp-299 each coordinate S-adenosyl-L-methionine. The active-site Nucleophile is the Cys-324. The Proton acceptor role is filled by Glu-358.

Belongs to the class I-like SAM-binding methyltransferase superfamily. RNA M5U methyltransferase family. TrmA subfamily.

The enzyme catalyses uridine(54) in tRNA + S-adenosyl-L-methionine = 5-methyluridine(54) in tRNA + S-adenosyl-L-homocysteine + H(+). The catalysed reaction is uridine(341) in tmRNA + S-adenosyl-L-methionine = 5-methyluridine(341) in tmRNA + S-adenosyl-L-homocysteine + H(+). Its function is as follows. Dual-specificity methyltransferase that catalyzes the formation of 5-methyluridine at position 54 (m5U54) in all tRNAs, and that of position 341 (m5U341) in tmRNA (transfer-mRNA). The sequence is that of tRNA/tmRNA (uracil-C(5))-methyltransferase from Salmonella agona (strain SL483).